A 158-amino-acid polypeptide reads, in one-letter code: Transcription elongation factor GreB (158 aa).

A coiled-coil region spans residues 53–75 (KRRLREIDRRVRFLTKRLEVLQI).

Belongs to the GreA/GreB family. GreB subfamily.

Its function is as follows. Necessary for efficient RNA polymerase transcription elongation past template-encoded arresting sites. The arresting sites in DNA have the property of trapping a certain fraction of elongating RNA polymerases that pass through, resulting in locked ternary complexes. Cleavage of the nascent transcript by cleavage factors such as GreA or GreB allows the resumption of elongation from the new 3'terminus. GreB releases sequences of up to 9 nucleotides in length. This Haemophilus influenzae (strain ATCC 51907 / DSM 11121 / KW20 / Rd) protein is Transcription elongation factor GreB.